Consider the following 189-residue polypeptide: Small ribosomal subunit protein uS5 (189 aa).

Positions 23–86 (FIDKLVHINR…ESAKREMIYV (64 aa)) constitute an S5 DRBM domain.

This sequence belongs to the universal ribosomal protein uS5 family. As to quaternary structure, part of the 30S ribosomal subunit. Contacts proteins S4 and S8.

With S4 and S12 plays an important role in translational accuracy. Its function is as follows. Located at the back of the 30S subunit body where it stabilizes the conformation of the head with respect to the body. The protein is Small ribosomal subunit protein uS5 of Bartonella bacilliformis (strain ATCC 35685 / KC583 / Herrer 020/F12,63).